Reading from the N-terminus, the 436-residue chain is MTDLTPREIVSELDRFIIGQKDAKRAVAVALRNRWRRKQLPDDLRDEVHPKNILMIGPTGVGKTEISRRLAKLARAPFIKVEATKFTEVGYVGRDVEQIVRDLVDTAIVQTREHMREDVKAKAHKAAEDRVLEAIAGTDARESTLEMFRKKLKAGELDDTVIELDIADTSNPMGGMFEIPGQPGANMGMMNLGDLFGKAMGGRTTRKKLTVAESYDVLIGEEADKLLDDETVNKAALEAVEQNGIVFLDEIDKVCARSDARGGDVSREGVQRDLLPLIEGTTVSTKHGPVKTDHILFIASGAFHIAKPSDLLPELQGRLPIRVNLRALSEEDFVRILTETDNALTRQYEALLGTEKVKVTFTKDGIHALAQIAAEVNHTVENIGARRLYTVMERVFEEMSFAAPDRSGEEIIVDEPFVTKNLGELTKSTDLSRYVL.

Residues Ile-18, 60 to 65, Asp-249, Glu-314, and Arg-386 each bind ATP; that span reads GVGKTE.

Belongs to the ClpX chaperone family. HslU subfamily. A double ring-shaped homohexamer of HslV is capped on each side by a ring-shaped HslU homohexamer. The assembly of the HslU/HslV complex is dependent on binding of ATP.

It is found in the cytoplasm. Its function is as follows. ATPase subunit of a proteasome-like degradation complex; this subunit has chaperone activity. The binding of ATP and its subsequent hydrolysis by HslU are essential for unfolding of protein substrates subsequently hydrolyzed by HslV. HslU recognizes the N-terminal part of its protein substrates and unfolds these before they are guided to HslV for hydrolysis. The protein is ATP-dependent protease ATPase subunit HslU of Ruegeria sp. (strain TM1040) (Silicibacter sp.).